The sequence spans 204 residues: Small ribosomal subunit protein uS4 (204 aa).

The interval 20–46 is disordered; it reads WGRPKSPINKREYGPGEHGQRRRKPSD. Residues 28–38 show a composition bias toward basic and acidic residues; sequence NKREYGPGEHG. Residues 93-156 form the S4 RNA-binding domain; sequence TRLDAVVYRM…RQMPLILEAL (64 aa).

This sequence belongs to the universal ribosomal protein uS4 family. Part of the 30S ribosomal subunit. Contacts protein S5. The interaction surface between S4 and S5 is involved in control of translational fidelity.

Functionally, one of the primary rRNA binding proteins, it binds directly to 16S rRNA where it nucleates assembly of the body of the 30S subunit. In terms of biological role, with S5 and S12 plays an important role in translational accuracy. The sequence is that of Small ribosomal subunit protein uS4 from Rhodospirillum rubrum (strain ATCC 11170 / ATH 1.1.1 / DSM 467 / LMG 4362 / NCIMB 8255 / S1).